We begin with the raw amino-acid sequence, 98 residues long: Citrate lyase acyl carrier protein (98 aa).

An O-(phosphoribosyl dephospho-coenzyme A)serine modification is found at serine 14.

It belongs to the CitD family. Oligomer with a subunit composition of (alpha,beta,gamma)6.

Its subcellular location is the cytoplasm. Covalent carrier of the coenzyme of citrate lyase. The protein is Citrate lyase acyl carrier protein of Shigella flexneri.